The primary structure comprises 76 residues: MARFYRRRKFCRFTAEGVEYIDYKDLDTLKAYITETGKIVPSRITGTKARYQRQLASAIKQARFLALLPYSDSHDN.

Belongs to the bacterial ribosomal protein bS18 family. In terms of assembly, part of the 30S ribosomal subunit. Forms a tight heterodimer with protein bS6.

In terms of biological role, binds as a heterodimer with protein bS6 to the central domain of the 16S rRNA, where it helps stabilize the platform of the 30S subunit. The polypeptide is Small ribosomal subunit protein bS18 (Alcanivorax borkumensis (strain ATCC 700651 / DSM 11573 / NCIMB 13689 / SK2)).